Reading from the N-terminus, the 71-residue chain is Small ribosomal subunit protein bS21 (71 aa).

The protein belongs to the bacterial ribosomal protein bS21 family.

In Blochmanniella pennsylvanica (strain BPEN), this protein is Small ribosomal subunit protein bS21.